The primary structure comprises 730 residues: Wall-associated receptor kinase-like 1 (730 aa).

An N-terminal signal peptide occupies residues 1-25 (MKTKTSIFQFIVASVLTLLINDSSA). The Extracellular portion of the chain corresponds to 26–358 (ATPPPPISNS…KPTKPPVLQG (333 aa)). N-linked (GlcNAc...) asparagine glycosylation is found at asparagine 34, asparagine 40, asparagine 70, asparagine 77, asparagine 92, asparagine 119, asparagine 132, asparagine 211, asparagine 233, asparagine 269, and asparagine 281. The atypical EGF-like stretch occupies residues 282–341 (CSCEYDYFSGMSYRNCYCDYGYTGNPYLRGGCVDTDSCEGNHNCGEDAHCVNMPGPMSMC). 3 cysteine pairs are disulfide-bonded: cysteine 284/cysteine 297, cysteine 319/cysteine 331, and cysteine 325/cysteine 341. A helical membrane pass occupies residues 359–379 (ILIGLSGLVFFVGLFWLFKLI). Residues 380-730 (KKRRNINRSK…DQPMAINNKR (351 aa)) lie on the Cytoplasmic side of the membrane. The Protein kinase domain maps to 429–702 (FSIDRVLGQG…KEVSNELERI (274 aa)). ATP is bound by residues 435–443 (LGQGGQGTV) and lysine 457. At tyrosine 502 the chain carries Phosphotyrosine. The Proton acceptor role is filled by aspartate 554. Threonine 588 and threonine 593 each carry phosphothreonine. A Phosphotyrosine modification is found at tyrosine 601. A disordered region spans residues 685-730 (KGKNRPNMKEVSNELERIRSSPEDLDVRTENEDEEEDQPMAINNKR). Positions 691 to 714 (NMKEVSNELERIRSSPEDLDVRTE) are enriched in basic and acidic residues.

It belongs to the protein kinase superfamily. Ser/Thr protein kinase family. As to expression, preferentially expressed in roots and flowers.

Its subcellular location is the membrane. The enzyme catalyses L-seryl-[protein] + ATP = O-phospho-L-seryl-[protein] + ADP + H(+). It carries out the reaction L-threonyl-[protein] + ATP = O-phospho-L-threonyl-[protein] + ADP + H(+). Its function is as follows. Serine/threonine-protein kinase that may function as a signaling receptor of extracellular matrix component. The chain is Wall-associated receptor kinase-like 1 (WAKL1) from Arabidopsis thaliana (Mouse-ear cress).